We begin with the raw amino-acid sequence, 137 residues long: Small ribosomal subunit protein uS9 (137 aa).

Residues 118–137 are disordered; that stretch reads KERKKYGLRKARKAPQYSKR.

Belongs to the universal ribosomal protein uS9 family.

This is Small ribosomal subunit protein uS9 from Acaryochloris marina (strain MBIC 11017).